A 239-amino-acid polypeptide reads, in one-letter code: Phosphoribosylaminoimidazole-succinocarboxamide synthase (239 aa).

This sequence belongs to the SAICAR synthetase family.

It catalyses the reaction 5-amino-1-(5-phospho-D-ribosyl)imidazole-4-carboxylate + L-aspartate + ATP = (2S)-2-[5-amino-1-(5-phospho-beta-D-ribosyl)imidazole-4-carboxamido]succinate + ADP + phosphate + 2 H(+). Its pathway is purine metabolism; IMP biosynthesis via de novo pathway; 5-amino-1-(5-phospho-D-ribosyl)imidazole-4-carboxamide from 5-amino-1-(5-phospho-D-ribosyl)imidazole-4-carboxylate: step 1/2. The sequence is that of Phosphoribosylaminoimidazole-succinocarboxamide synthase from Bacillus cereus (strain B4264).